Reading from the N-terminus, the 684-residue chain is Sorbicillinoid biosynthetic cluster transcription factor 2 (684 aa).

A disordered region spans residues 114–151; the sequence is ISSAPSLETPPESVAASPPTVDSIPVSHHVNEDPEAEP.

The protein resides in the nucleus. Transcription factor that acts in concert with sorR1 which is a transcriptional activator of the gene cluster that mediates the biosynthesis of sorbicillinoids, a diverse group of yellow secondary metabolites that restrict growth of competing pathogenic fungi but not of bacteria. This is Sorbicillinoid biosynthetic cluster transcription factor 2 from Penicillium rubens (strain ATCC 28089 / DSM 1075 / NRRL 1951 / Wisconsin 54-1255) (Penicillium chrysogenum).